The sequence spans 36 residues: MSASYLPSILVPLVGLVFPAITMVSLFLYIEQDEIV.

A helical membrane pass occupies residues 9 to 29; that stretch reads ILVPLVGLVFPAITMVSLFLY.

It belongs to the PsaI family.

The protein localises to the plastid. It is found in the chloroplast thylakoid membrane. In terms of biological role, may help in the organization of the PsaL subunit. This chain is Photosystem I reaction center subunit VIII, found in Zygnema circumcarinatum (Green alga).